A 285-amino-acid polypeptide reads, in one-letter code: Release factor glutamine methyltransferase (285 aa).

Positions 143 and 189 each coordinate S-adenosyl-L-methionine. 189 to 192 (NPPY) is a substrate binding site.

It belongs to the protein N5-glutamine methyltransferase family. PrmC subfamily.

It catalyses the reaction L-glutaminyl-[peptide chain release factor] + S-adenosyl-L-methionine = N(5)-methyl-L-glutaminyl-[peptide chain release factor] + S-adenosyl-L-homocysteine + H(+). Its function is as follows. Methylates the class 1 translation termination release factors RF1/PrfA and RF2/PrfB on the glutamine residue of the universally conserved GGQ motif. This Clostridium acetobutylicum (strain ATCC 824 / DSM 792 / JCM 1419 / IAM 19013 / LMG 5710 / NBRC 13948 / NRRL B-527 / VKM B-1787 / 2291 / W) protein is Release factor glutamine methyltransferase.